The following is a 308-amino-acid chain: Cytochrome b (308 aa).

Transmembrane regions (helical) follow at residues 1 to 21, 45 to 66, 81 to 101, and 146 to 166; these read FGLL…LLAA, WLIR…YLHI, WNIG…GYVX, and FFAL…VHLT. 2 residues coordinate heme b: His51 and His65. 2 residues coordinate heme b: His150 and His164. His169 provides a ligand contact to a ubiquinone. 3 consecutive transmembrane segments (helical) span residues 194–214, 256–276, and 288–308; these read TKDV…ALFS, LGGV…PFLH, and LSQI…WVSN.

This sequence belongs to the cytochrome b family. In terms of assembly, the cytochrome bc1 complex contains 11 subunits: 3 respiratory subunits (MT-CYB, CYC1 and UQCRFS1), 2 core proteins (UQCRC1 and UQCRC2) and 6 low-molecular weight proteins (UQCRH/QCR6, UQCRB/QCR7, UQCRQ/QCR8, UQCR10/QCR9, UQCR11/QCR10 and a cleavage product of UQCRFS1). This cytochrome bc1 complex then forms a dimer. Requires heme b as cofactor.

The protein resides in the mitochondrion inner membrane. Functionally, component of the ubiquinol-cytochrome c reductase complex (complex III or cytochrome b-c1 complex) that is part of the mitochondrial respiratory chain. The b-c1 complex mediates electron transfer from ubiquinol to cytochrome c. Contributes to the generation of a proton gradient across the mitochondrial membrane that is then used for ATP synthesis. The sequence is that of Cytochrome b (MT-CYB) from Pomatostomus ruficeps (Chestnut-crowned babbler).